Reading from the N-terminus, the 625-residue chain is Phosphomethylpyrimidine synthase (625 aa).

Substrate contacts are provided by residues N230, M259, Y288, H324, 344-346, 385-388, and E424; these read SRG and DGLR. H428 lines the Zn(2+) pocket. Y451 provides a ligand contact to substrate. Position 492 (H492) interacts with Zn(2+). Residues C572, C575, and C580 each coordinate [4Fe-4S] cluster.

This sequence belongs to the ThiC family. As to quaternary structure, homodimer. [4Fe-4S] cluster serves as cofactor.

It carries out the reaction 5-amino-1-(5-phospho-beta-D-ribosyl)imidazole + S-adenosyl-L-methionine = 4-amino-2-methyl-5-(phosphooxymethyl)pyrimidine + CO + 5'-deoxyadenosine + formate + L-methionine + 3 H(+). It participates in cofactor biosynthesis; thiamine diphosphate biosynthesis. In terms of biological role, catalyzes the synthesis of the hydroxymethylpyrimidine phosphate (HMP-P) moiety of thiamine from aminoimidazole ribotide (AIR) in a radical S-adenosyl-L-methionine (SAM)-dependent reaction. The polypeptide is Phosphomethylpyrimidine synthase (Xanthomonas oryzae pv. oryzae (strain MAFF 311018)).